The following is a 447-amino-acid chain: Xylose isomerase (447 aa).

Active-site residues include histidine 102 and aspartate 105. Mg(2+)-binding residues include glutamate 233, glutamate 269, histidine 272, aspartate 297, aspartate 308, aspartate 310, and aspartate 340.

The protein belongs to the xylose isomerase family. Homotetramer. Mg(2+) serves as cofactor.

The protein localises to the cytoplasm. It catalyses the reaction alpha-D-xylose = alpha-D-xylulofuranose. The polypeptide is Xylose isomerase (Pediococcus pentosaceus (strain ATCC 25745 / CCUG 21536 / LMG 10740 / 183-1w)).